The chain runs to 3133 residues: Probable polyketide synthase 38 (3133 aa).

Positions 9–440 (DDDVAVIGIG…GSNVCLILSE (432 aa)) constitute a Ketosynthase family 3 (KS3) domain. Catalysis depends on for beta-ketoacyl synthase activity residues Cys181, His320, and His363. The acyl/malonyl transferase stretch occupies residues 647 to 680 (GVSADIIIGHSLGEISSAYCSGMIDFQTLCYLTY). Catalysis depends on Ser657, which acts as the For acyl/malonyl transferase activity. An N-terminal hotdog fold region spans residues 945-1067 (GPSIHSLGNN…GNFSLSKHNI (123 aa)). The PKS/mFAS DH domain occupies 945 to 1248 (GPSIHSLGNN…CTIVASNPDS (304 aa)). His979 acts as the Proton acceptor; for dehydratase activity in catalysis. A C-terminal hotdog fold region spans residues 1083 to 1248 (NFTCISKQDL…CTIVASNPDS (166 aa)). The Proton donor; for dehydratase activity role is filled by Asp1155. Residues 1370–1408 (NNNNNNNNNNNNNNNNNNNNNNNNNNNNNNNNNDNDNDN) are disordered. One can recognise a Carrier domain in the interval 2562-2639 (NNNEIIRSTI…QSIEIIKSAH (78 aa)). Residue Ser2599 is modified to O-(pantetheine 4'-phosphoryl)serine. Positions 2649-2711 (NNNNSNHHDN…NNNNNNNNNN (63 aa)) form a coiled coil. 2 disordered regions span residues 2691–2715 (LNNN…NNNN) and 2794–2817 (GNIS…NNNQ). 2 stretches are compositionally biased toward low complexity: residues 2692 to 2715 (NNNN…NNNN) and 2795 to 2817 (NISN…NNNQ).

Pantetheine 4'-phosphate serves as cofactor.

In terms of biological role, probable polyketide synthase. The sequence is that of Probable polyketide synthase 38 (pks38) from Dictyostelium discoideum (Social amoeba).